The primary structure comprises 3859 residues: Transformation/transcription domain-associated protein (3859 aa).

The residue at position 2 (A2) is an N-acetylalanine. Positions 491-526 (PAAPGPAPSPAPVPAPPPPPPPPPPATPVTPAPVPP) are enriched in pro residues. Residues 491 to 541 (PAAPGPAPSPAPVPAPPPPPPPPPPATPVTPAPVPPFEKQGEKDKEDKQTF) are disordered. Residues 529-539 (KQGEKDKEDKQ) show a composition bias toward basic and acidic residues. The residue at position 1628 (S1628) is a Phosphoserine. The interaction with TP53 stretch occupies residues 2010 to 2388 (SEVVIKWELQ…SPMAANQTPT (379 aa)). The segment at 2023-2044 (DQQPDSDMDPNSSGEGVNSVSS) is disordered. Low complexity predominate over residues 2033–2044 (NSSGEGVNSVSS). The Bipartite nuclear localization signal signature appears at 2047–2062 (KRGLSVDSAQEVKRFR). Phosphoserine is present on residues S2051 and S2077. Residue K2543 forms a Glycyl lysine isopeptide (Lys-Gly) (interchain with G-Cter in SUMO2) linkage. The span at 2543–2554 (KQEPRERENSES) shows a compositional bias: basic and acidic residues. Residues 2543-2578 (KQEPRERENSESKEEDVEIDIELAPGDQTSTPKTKE) form a disordered region. In terms of domain architecture, FAT spans 2692-3275 (VLKYLGKTHN…YFPIRTLYLT (584 aa)). Position 3078 is an N6-acetyllysine (K3078). The region spanning 3500–3823 (MPRVEIVQKH…AVTAIMTRLH (324 aa)) is the PI3K/PI4K catalytic domain. Positions 3506 to 3512 (VQKHNTA) are G-loop. The interval 3687–3695 (HLNRLNPEM) is catalytic loop. Residues 3707–3732 (VAYFRFDINDATGDLDANRPVPFRLT) form an activation loop region. The FATC domain maps to 3827–3859 (QFEGGESKVNTLVAAANSLDNLCRMDPAWHPWL).

It belongs to the PI3/PI4-kinase family. TRA1 subfamily. In terms of assembly, interacts with MYC, E2F1 and E2F4 transcription factors. Interacts directly with p53/TP53. Interacts with GCN5L2. Component of various HAT complexes. Component of the PCAF complex, at least composed of TADA2L/ADA2, SUPT3H, TADA3L/ADA3, TAF5L/PAF65-beta, TAF6L/PAF65-alpha, TAF10/TAFII30, TAF12/TAFII20, TAF9/TAFII31 and TRRAP. Component of the TFTC-HAT complex, at least composed of TAF5L, TAF6L, TADA3L, SUPT3H/SPT3, TAF2/TAFII150, TAF4/TAFII135, TAF5/TAFII100, GCN5L2/GCN5, TAF10 and TRRAP. Component of the NuA4 histone acetyltransferase complex which contains the catalytic subunit KAT5/TIP60 and the subunits EP400, TRRAP/PAF400, BRD8/SMAP, EPC1, DMAP1/DNMAP1, RUVBL1/TIP49, RUVBL2, ING3, actin, ACTL6A/BAF53A, MORF4L1/MRG15, MORF4L2/MRGX, MRGBP, YEATS4/GAS41, VPS72/YL1 and MEAF6. Component of the STAGA complex, at least composed of SUPT3H, GCN5L2, SUPT7L, TAF5L, TAF6L, TADA3L, TAD1L, TAF10, TAF12, TRRAP and TAF9. The STAGA core complex is associated with a subcomplex required for histone deubiquitination composed of ATXN7L3, ENY2 and USP22. Component of the BAF53 complex, at least composed of BAF53A, RUVBL1, SMARCA4/BRG1, and TRRAP, which preferentially acetylates histone H4 (and H2A) within nucleosomes. Interacts with NPAT. Interaction with TELO2 and TTI1. Component of a SWR1-like complex.

It localises to the nucleus. In terms of biological role, adapter protein, which is found in various multiprotein chromatin complexes with histone acetyltransferase activity (HAT), which gives a specific tag for epigenetic transcription activation. Component of the NuA4 histone acetyltransferase complex which is responsible for acetylation of nucleosomal histones H4 and H2A. Plays a central role in MYC transcription activation, and also participates in cell transformation by MYC. Required for p53/TP53-, E2F1- and E2F4-mediated transcription activation. Also involved in transcription activation mediated by the adenovirus E1A, a viral oncoprotein that deregulates transcription of key genes. Probably acts by linking transcription factors such as E1A, MYC or E2F1 to HAT complexes such as STAGA thereby allowing transcription activation. Probably not required in the steps following histone acetylation in processes of transcription activation. May be required for the mitotic checkpoint and normal cell cycle progression. Component of a SWR1-like complex that specifically mediates the removal of histone H2A.Z/H2AZ1 from the nucleosome. May play a role in the formation and maintenance of the auditory system. The chain is Transformation/transcription domain-associated protein (TRRAP) from Homo sapiens (Human).